We begin with the raw amino-acid sequence, 88 residues long: UPF0335 protein Mnod_5968 (88 aa).

It belongs to the UPF0335 family.

In Methylobacterium nodulans (strain LMG 21967 / CNCM I-2342 / ORS 2060), this protein is UPF0335 protein Mnod_5968.